The sequence spans 473 residues: Glutamyl-tRNA reductase (473 aa).

Substrate contacts are provided by residues 49-52, Ser109, 114-116, and Gln120; these read TCNR and EHQ. Catalysis depends on Cys50, which acts as the Nucleophile. Position 189 to 194 (189 to 194) interacts with NADP(+); the sequence is GAGAMA. The disordered stretch occupies residues 422 to 473; the sequence is VAISAPQPSTDSPARAAYQPTDEAATDAEPRRDDAEPPSAAAAQDAGRESRP.

The protein belongs to the glutamyl-tRNA reductase family. In terms of assembly, homodimer.

It carries out the reaction (S)-4-amino-5-oxopentanoate + tRNA(Glu) + NADP(+) = L-glutamyl-tRNA(Glu) + NADPH + H(+). The protein operates within porphyrin-containing compound metabolism; protoporphyrin-IX biosynthesis; 5-aminolevulinate from L-glutamyl-tRNA(Glu): step 1/2. Its function is as follows. Catalyzes the NADPH-dependent reduction of glutamyl-tRNA(Glu) to glutamate 1-semialdehyde (GSA). This is Glutamyl-tRNA reductase from Acidothermus cellulolyticus (strain ATCC 43068 / DSM 8971 / 11B).